The following is a 197-amino-acid chain: Shikimate kinase (197 aa).

14–19 (GSGKST) is a binding site for ATP. Serine 18 contacts Mg(2+). Substrate is bound by residues aspartate 36, arginine 60, and glycine 82. Arginine 120 contacts ATP. Arginine 147 contacts substrate.

Belongs to the shikimate kinase family. Monomer. Requires Mg(2+) as cofactor.

It localises to the cytoplasm. The catalysed reaction is shikimate + ATP = 3-phosphoshikimate + ADP + H(+). Its pathway is metabolic intermediate biosynthesis; chorismate biosynthesis; chorismate from D-erythrose 4-phosphate and phosphoenolpyruvate: step 5/7. Catalyzes the specific phosphorylation of the 3-hydroxyl group of shikimic acid using ATP as a cosubstrate. The protein is Shikimate kinase of Prosthecochloris aestuarii (strain DSM 271 / SK 413).